Here is a 472-residue protein sequence, read N- to C-terminus: Adenosylhomocysteinase (472 aa).

Substrate contacts are provided by Thr-62, Asp-137, and Glu-197. Residue 198 to 200 coordinates NAD(+); that stretch reads TTT. Positions 227 and 231 each coordinate substrate. NAD(+) contacts are provided by residues Asn-232, 261–266, Glu-284, Asn-319, 340–342, and Asn-385; these read GYGDVG and IGH.

Belongs to the adenosylhomocysteinase family. It depends on NAD(+) as a cofactor.

It localises to the cytoplasm. The enzyme catalyses S-adenosyl-L-homocysteine + H2O = L-homocysteine + adenosine. The protein operates within amino-acid biosynthesis; L-homocysteine biosynthesis; L-homocysteine from S-adenosyl-L-homocysteine: step 1/1. Functionally, may play a key role in the regulation of the intracellular concentration of adenosylhomocysteine. The chain is Adenosylhomocysteinase from Bordetella petrii (strain ATCC BAA-461 / DSM 12804 / CCUG 43448).